Reading from the N-terminus, the 440-residue chain is Ribosomal protein uS12 methylthiotransferase RimO (440 aa).

Positions 8 to 124 constitute an MTTase N-terminal domain; sequence TSVFLLSLGC…VLDALGARYH (117 aa). [4Fe-4S] cluster contacts are provided by Cys17, Cys53, Cys87, Cys148, Cys152, and Cys155. One can recognise a Radical SAM core domain in the interval 134 to 363; it reads LTPPHSSYLK…MELQEEIARK (230 aa). The TRAM domain maps to 366-437; the sequence is EAFVGSLMTV…AYELHGTVES (72 aa).

This sequence belongs to the methylthiotransferase family. RimO subfamily. Requires [4Fe-4S] cluster as cofactor.

It localises to the cytoplasm. The enzyme catalyses L-aspartate(89)-[ribosomal protein uS12]-hydrogen + (sulfur carrier)-SH + AH2 + 2 S-adenosyl-L-methionine = 3-methylsulfanyl-L-aspartate(89)-[ribosomal protein uS12]-hydrogen + (sulfur carrier)-H + 5'-deoxyadenosine + L-methionine + A + S-adenosyl-L-homocysteine + 2 H(+). Catalyzes the methylthiolation of an aspartic acid residue of ribosomal protein uS12. This Chlorobium luteolum (strain DSM 273 / BCRC 81028 / 2530) (Pelodictyon luteolum) protein is Ribosomal protein uS12 methylthiotransferase RimO.